The primary structure comprises 302 residues: Tyrosine recombinase XerC (302 aa).

The Core-binding (CB) domain occupies Gln2–Leu89. One can recognise a Tyr recombinase domain in the interval Arg110 to Asp289. Residues Arg150, Lys174, His241, Arg244, and His267 contribute to the active site. Tyr276 (O-(3'-phospho-DNA)-tyrosine intermediate) is an active-site residue.

It belongs to the 'phage' integrase family. XerC subfamily. As to quaternary structure, forms a cyclic heterotetrameric complex composed of two molecules of XerC and two molecules of XerD.

The protein localises to the cytoplasm. Site-specific tyrosine recombinase, which acts by catalyzing the cutting and rejoining of the recombining DNA molecules. The XerC-XerD complex is essential to convert dimers of the bacterial chromosome into monomers to permit their segregation at cell division. It also contributes to the segregational stability of plasmids. The sequence is that of Tyrosine recombinase XerC from Pelobacter propionicus (strain DSM 2379 / NBRC 103807 / OttBd1).